Here is a 463-residue protein sequence, read N- to C-terminus: Peptidase inhibitor 16 (463 aa).

The first 27 residues, 1–27, serve as a signal peptide directing secretion; the sequence is MHGSCSFLMLLLPLLLLLVATTGPVGA. The SCP domain occupies 37–165; sequence VELHNLYRAQ…TNIELLVCNY (129 aa). Asparagine 114 carries an N-linked (GlcNAc...) asparagine glycan. 3 disordered regions span residues 262–281, 303–341, and 383–408; these read TQAP…TEAP, EPVT…DPKM, and LQAT…SATA. The span at 318–327 shows a compositional bias: basic and acidic residues; it reads SADKVTDKTK. The tract at residues 386 to 395 is O-glycosylated at one site; sequence TLDHTGHTSS. Positions 392–408 are enriched in polar residues; sequence HTSSKSLPNFPNTSATA. Asparagine 403 and asparagine 409 each carry an N-linked (GlcNAc...) asparagine glycan.

Belongs to the CRISP family. As to quaternary structure, interacts with PSP94/MSMB. N- and O-glycosylated. O-glycosylated with core 1 or possibly core 8 glycans. As to expression, expressed in prostate, testis, ovary and intestine. Concentrates in prostate cancer patient's sera.

The protein resides in the secreted. In terms of biological role, may inhibit cardiomyocyte growth. This chain is Peptidase inhibitor 16 (PI16), found in Homo sapiens (Human).